We begin with the raw amino-acid sequence, 884 residues long: Alanine--tRNA ligase (884 aa).

Zn(2+) contacts are provided by histidine 562, histidine 566, cysteine 676, and histidine 680.

The protein belongs to the class-II aminoacyl-tRNA synthetase family. Zn(2+) serves as cofactor.

Its subcellular location is the cytoplasm. It carries out the reaction tRNA(Ala) + L-alanine + ATP = L-alanyl-tRNA(Ala) + AMP + diphosphate. In terms of biological role, catalyzes the attachment of alanine to tRNA(Ala) in a two-step reaction: alanine is first activated by ATP to form Ala-AMP and then transferred to the acceptor end of tRNA(Ala). Also edits incorrectly charged Ser-tRNA(Ala) and Gly-tRNA(Ala) via its editing domain. The polypeptide is Alanine--tRNA ligase (Jannaschia sp. (strain CCS1)).